Reading from the N-terminus, the 253-residue chain is 4-hydroxy-tetrahydrodipicolinate reductase (253 aa).

Residues 8 to 13, Asp34, 76 to 78, and 108 to 111 each bind NAD(+); these read GAKGRM, GTT, and APNF. The active-site Proton donor/acceptor is the His138. His139 serves as a coordination point for (S)-2,3,4,5-tetrahydrodipicolinate. The Proton donor role is filled by Lys142. 148–149 is a (S)-2,3,4,5-tetrahydrodipicolinate binding site; it reads GT.

The protein belongs to the DapB family.

The protein resides in the cytoplasm. It catalyses the reaction (S)-2,3,4,5-tetrahydrodipicolinate + NAD(+) + H2O = (2S,4S)-4-hydroxy-2,3,4,5-tetrahydrodipicolinate + NADH + H(+). The enzyme catalyses (S)-2,3,4,5-tetrahydrodipicolinate + NADP(+) + H2O = (2S,4S)-4-hydroxy-2,3,4,5-tetrahydrodipicolinate + NADPH + H(+). The protein operates within amino-acid biosynthesis; L-lysine biosynthesis via DAP pathway; (S)-tetrahydrodipicolinate from L-aspartate: step 4/4. Functionally, catalyzes the conversion of 4-hydroxy-tetrahydrodipicolinate (HTPA) to tetrahydrodipicolinate. The sequence is that of 4-hydroxy-tetrahydrodipicolinate reductase from Bifidobacterium animalis subsp. lactis (strain AD011).